Here is a 172-residue protein sequence, read N- to C-terminus: Small ribosomal subunit protein uS5 (172 aa).

An S5 DRBM domain is found at 16-79; that stretch reads LKDRLVAINR…ESAKKNLTRV (64 aa).

The protein belongs to the universal ribosomal protein uS5 family. As to quaternary structure, part of the 30S ribosomal subunit. Contacts proteins S4 and S8.

Functionally, with S4 and S12 plays an important role in translational accuracy. Its function is as follows. Located at the back of the 30S subunit body where it stabilizes the conformation of the head with respect to the body. This chain is Small ribosomal subunit protein uS5, found in Bacteroides fragilis (strain ATCC 25285 / DSM 2151 / CCUG 4856 / JCM 11019 / LMG 10263 / NCTC 9343 / Onslow / VPI 2553 / EN-2).